Consider the following 122-residue polypeptide: Large ribosomal subunit protein uL14c (122 aa).

Belongs to the universal ribosomal protein uL14 family. As to quaternary structure, part of the 50S ribosomal subunit.

It localises to the plastid. It is found in the chloroplast. Its function is as follows. Binds to 23S rRNA. The chain is Large ribosomal subunit protein uL14c from Gnetum parvifolium (Small-leaved jointfir).